Here is a 598-residue protein sequence, read N- to C-terminus: Probable ATP-dependent RNA helicase DDX52 (598 aa).

K15 bears the N6-acetyllysine mark. A Phosphoserine modification is found at S39. A Q motif motif is present at residues 166 to 194 (QLDQEYKINSRLLQNILDAGFQVPTPIQM). Residues 197-375 (IPVMLHGREL…KLNLDNVVSV (179 aa)) form the Helicase ATP-binding domain. 210–217 (APTGSGKT) contacts ATP. The DEAD box motif lies at 319–322 (DESD). One can recognise a Helicase C-terminal domain in the interval 386–547 (TVEQELLFVG…PVPEYIKGFQ (162 aa)).

Belongs to the DEAD box helicase family. DDX52/ROK1 subfamily.

The protein resides in the nucleus. The protein localises to the nucleolus. The enzyme catalyses ATP + H2O = ADP + phosphate + H(+). Functionally, required for efficient ribosome biogenesis. May control cell cycle progression by regulating translation of mRNAs that contain a terminal oligo pyrimidine (TOP) motif in their 5' UTRs, such as GTPBP4. This chain is Probable ATP-dependent RNA helicase DDX52 (Ddx52), found in Mus musculus (Mouse).